Consider the following 215-residue polypeptide: Heart- and neural crest derivatives-expressed protein 1 (215 aa).

2 disordered regions span residues 53-109 (APDF…RTES) and 169-202 (VDGG…KGRT). Low complexity predominate over residues 65-75 (AAAAAATYGPD). Over residues 92–104 (LGRRKGSGPKKER) the composition is skewed to basic residues. A bHLH domain is found at 94–146 (RRKGSGPKKERRRTESINSAFAELRECIPNVPADTKLSKIKTLRLATSYIAYL). The residue at position 107 (Thr-107) is a Phosphothreonine; by PLK4. Ser-109 carries the post-translational modification Phosphoserine; by PLK4.

Efficient DNA binding requires dimerization with another bHLH protein. Forms homodimers and heterodimers with TCF3 gene products E12 and E47, HAND2 and HEY1, HEY2 and HEYL (hairy-related transcription factors). Interacts with MDFIC. Interacts with SOX15; the interaction enhances HAND1-induced differentiation of trophoblast giant cells. Post-translationally, phosphorylation by PLK4 disrupts the interaction with MDFIC and leads to translocation into the nucleoplasm, allowing dimerization and transcription factor activity.

It is found in the nucleus. The protein localises to the nucleoplasm. The protein resides in the nucleolus. Its function is as follows. Transcription factor that plays an essential role in both trophoblast giant cell differentiation and in cardiac morphogenesis. Binds the DNA sequence 5'-NRTCTG-3' (non-canonical E-box). Acts as a transcriptional repressor of SOX15. In the adult, could be required for ongoing expression of cardiac-specific genes. The polypeptide is Heart- and neural crest derivatives-expressed protein 1 (HAND1) (Oryctolagus cuniculus (Rabbit)).